The primary structure comprises 129 residues: Small ribosomal subunit protein uS11 (129 aa).

It belongs to the universal ribosomal protein uS11 family. In terms of assembly, part of the 30S ribosomal subunit. Interacts with proteins S7 and S18. Binds to IF-3.

In terms of biological role, located on the platform of the 30S subunit, it bridges several disparate RNA helices of the 16S rRNA. Forms part of the Shine-Dalgarno cleft in the 70S ribosome. The polypeptide is Small ribosomal subunit protein uS11 (Yersinia enterocolitica serotype O:8 / biotype 1B (strain NCTC 13174 / 8081)).